The sequence spans 328 residues: Glycerophosphodiester phosphodiesterase GDPD4 (328 aa).

A helical membrane pass occupies residues 35-55 (TILFAVIFLAIFPPLYFHFKL). Residues 73–312 (PLVCAHGGDS…SDPSMFQGLM (240 aa)) form the GP-PDE domain.

This sequence belongs to the glycerophosphoryl diester phosphodiesterase family. In terms of tissue distribution, expressed in rosette and cauline leaves.

The protein resides in the membrane. It catalyses the reaction a sn-glycero-3-phosphodiester + H2O = an alcohol + sn-glycerol 3-phosphate + H(+). This Arabidopsis thaliana (Mouse-ear cress) protein is Glycerophosphodiester phosphodiesterase GDPD4.